Here is a 195-residue protein sequence, read N- to C-terminus: MIIRDVELVKIARTPGDYPPPLKGEVAFVGRSNVGKSSLLNALFNRKVAFVSKTPGKTRSINFYLVNSKYYFVDLPGYGYAKVSKKERMLWKRLVEDYFKNRWSLQMVFLLVDGRIPPQDSDFMMIEWMKSLNIPFTIVLTKMDKVKMSERAKKLEEHRKVFSRYGEYTIIPTSSVTGEGISELLDLISTLLKEN.

In terms of domain architecture, EngB-type G spans 22-194 (LKGEVAFVGR…LDLISTLLKE (173 aa)). GTP contacts are provided by residues 30–37 (GRSNVGKS), 56–60 (GKTRS), 74–77 (DLPG), 141–144 (TKMD), and 173–175 (TSS). The Mg(2+) site is built by Ser37 and Thr58.

Belongs to the TRAFAC class TrmE-Era-EngA-EngB-Septin-like GTPase superfamily. EngB GTPase family. The cofactor is Mg(2+).

Its function is as follows. Necessary for normal cell division and for the maintenance of normal septation. In Thermotoga sp. (strain RQ2), this protein is Probable GTP-binding protein EngB.